A 191-amino-acid polypeptide reads, in one-letter code: Peptidyl-tRNA hydrolase (191 aa).

Tyr17 is a tRNA binding site. His22 functions as the Proton acceptor in the catalytic mechanism. TRNA-binding residues include Tyr68, Asn70, and Asn116.

The protein belongs to the PTH family. Monomer.

The protein resides in the cytoplasm. It catalyses the reaction an N-acyl-L-alpha-aminoacyl-tRNA + H2O = an N-acyl-L-amino acid + a tRNA + H(+). Its function is as follows. Hydrolyzes ribosome-free peptidyl-tRNAs (with 1 or more amino acids incorporated), which drop off the ribosome during protein synthesis, or as a result of ribosome stalling. In terms of biological role, catalyzes the release of premature peptidyl moieties from peptidyl-tRNA molecules trapped in stalled 50S ribosomal subunits, and thus maintains levels of free tRNAs and 50S ribosomes. The protein is Peptidyl-tRNA hydrolase of Francisella tularensis subsp. mediasiatica (strain FSC147).